We begin with the raw amino-acid sequence, 440 residues long: 3-phosphoshikimate 1-carboxyvinyltransferase (440 aa).

Residues K25, S26, and R30 each contribute to the 3-phosphoshikimate site. Residue K25 coordinates phosphoenolpyruvate. G96 and R124 together coordinate phosphoenolpyruvate. Residues S168, Q169, D310, and K337 each contribute to the 3-phosphoshikimate site. Q169 is a binding site for phosphoenolpyruvate. The Proton acceptor role is filled by D310. Phosphoenolpyruvate contacts are provided by R341, R382, and K409.

This sequence belongs to the EPSP synthase family. As to quaternary structure, monomer.

It is found in the cytoplasm. It catalyses the reaction 3-phosphoshikimate + phosphoenolpyruvate = 5-O-(1-carboxyvinyl)-3-phosphoshikimate + phosphate. Its pathway is metabolic intermediate biosynthesis; chorismate biosynthesis; chorismate from D-erythrose 4-phosphate and phosphoenolpyruvate: step 6/7. In terms of biological role, catalyzes the transfer of the enolpyruvyl moiety of phosphoenolpyruvate (PEP) to the 5-hydroxyl of shikimate-3-phosphate (S3P) to produce enolpyruvyl shikimate-3-phosphate and inorganic phosphate. The chain is 3-phosphoshikimate 1-carboxyvinyltransferase from Chlamydia trachomatis serovar A (strain ATCC VR-571B / DSM 19440 / HAR-13).